The following is a 377-amino-acid chain: UDP-N-acetylglucosamine--N-acetylmuramyl-(pentapeptide) pyrophosphoryl-undecaprenol N-acetylglucosamine transferase (377 aa).

UDP-N-acetyl-alpha-D-glucosamine is bound by residues 11 to 13 (TGG), Asn123, Arg164, Ser194, and Gln295.

This sequence belongs to the glycosyltransferase 28 family. MurG subfamily.

It localises to the cell inner membrane. It carries out the reaction di-trans,octa-cis-undecaprenyl diphospho-N-acetyl-alpha-D-muramoyl-L-alanyl-D-glutamyl-meso-2,6-diaminopimeloyl-D-alanyl-D-alanine + UDP-N-acetyl-alpha-D-glucosamine = di-trans,octa-cis-undecaprenyl diphospho-[N-acetyl-alpha-D-glucosaminyl-(1-&gt;4)]-N-acetyl-alpha-D-muramoyl-L-alanyl-D-glutamyl-meso-2,6-diaminopimeloyl-D-alanyl-D-alanine + UDP + H(+). It participates in cell wall biogenesis; peptidoglycan biosynthesis. In terms of biological role, cell wall formation. Catalyzes the transfer of a GlcNAc subunit on undecaprenyl-pyrophosphoryl-MurNAc-pentapeptide (lipid intermediate I) to form undecaprenyl-pyrophosphoryl-MurNAc-(pentapeptide)GlcNAc (lipid intermediate II). In Opitutus terrae (strain DSM 11246 / JCM 15787 / PB90-1), this protein is UDP-N-acetylglucosamine--N-acetylmuramyl-(pentapeptide) pyrophosphoryl-undecaprenol N-acetylglucosamine transferase.